Here is an 898-residue protein sequence, read N- to C-terminus: Translation initiation factor IF-2 (898 aa).

2 disordered regions span residues 51–70 (RKSH…LKRK) and 114–303 (LAAE…KQHG). 2 stretches are compositionally biased toward basic and acidic residues: residues 114–171 (LAAE…EKSK) and 184–258 (PAKE…DDKG). The tr-type G domain maps to 398-567 (HRAPVVTIMG…LLQSELLELQ (170 aa)). Residues 407–414 (GHVDHGKT) form a G1 region. 407–414 (GHVDHGKT) is a GTP binding site. A G2 region spans residues 432–436 (GITQH). Positions 453–456 (DTPG) are G3. GTP-binding positions include 453-457 (DTPGH) and 507-510 (NKID). Residues 507-510 (NKID) form a G4 region. The segment at 543–545 (SAH) is G5.

The protein belongs to the TRAFAC class translation factor GTPase superfamily. Classic translation factor GTPase family. IF-2 subfamily.

It is found in the cytoplasm. Its function is as follows. One of the essential components for the initiation of protein synthesis. Protects formylmethionyl-tRNA from spontaneous hydrolysis and promotes its binding to the 30S ribosomal subunits. Also involved in the hydrolysis of GTP during the formation of the 70S ribosomal complex. This chain is Translation initiation factor IF-2, found in Alcanivorax borkumensis (strain ATCC 700651 / DSM 11573 / NCIMB 13689 / SK2).